The chain runs to 1336 residues: MDVLEMFDVNYESPILESFDSTTQSLNDVHVFMSRIQMSAYDADGEGRIEYRNLKLYEISSGIFISTDRLDTGASGVEDDHEMVDYYSSARLTREFLGESLDSQKSDYFEGIKKVFSFYKNKCNESRYIKEFFEEIQFRNICGFPKQAGTSSTDIFDQFNSVDVLLQDPVTSVWNKKVGSKKANIVIIPPATNLPITEACATAGFQPEGFPKLGSGSFFTVQFDPFFSTRFKAHETDDVALLDPTLTLLHEMTHGLHFQKGIANPVNRSGETPAWATTWGRVTGDNDAFKETPMEELLTFNKHTIDDDIEISDHLKSTYIGFLYNGRNEDDPTESVDGVYQNVSSFLNQYRGFEISSDFQHFIESCYGVKYNQESKKFIVNPRNIKRYVQDGFFIDEAKFARILNIKTRSYYTLMPDNLGVWSYRVDILNRLRETFDEDRGLLSQELDFHTALTPVVSENPALELEVAGMQRMVSLPKIKASYLPSDIKIKNFTGQKISHDTILDTNISGIIISKIKYKSDFVVDESMPRSSLNTTNYNLSPIKGTKFETDIRDKTSVKVTVSEITAPMINHVMKLDNSKVLTERPSLNEDLEETFKNTKDVYIPKTTAMMKLKEGADQTLGAVGFAVWSGQILEDLYNLAQKKEVSIDQIKDDLMSILPFYCAYKNLSAEKYEQAFANATLDAFLIFATDGGGFAGLGITVGAIAINSMYAKAETMEAYDSMFGKYVDQYQNDIKNFTLNAYVQWENNILSRLWNESRLAITGFRNMLKTVKTVMEFDATNQAYSEEDRKIIKAKCEEIFSEFPMLMQTFAKNSMTANLENASKIFNDIVWQKIKEELDQYVIDSKKYFLDSLEEAYNNGSISAESYYKYQTEAREKFVSPREVIDLYIAAHDTVVKRKRYIRRYSRKYDLATDFKGNTVHLNGLGEGTQDIQDLYGNYSVYADKKTVSTQEGHFDQTIKIAKDTNTINKVVLAVSSNNGKEYALNKDEQYTISFWLRMPVPSSSEERRIFSYSAVSGVNKEVEELILQVKNNEFVLATANLLRNSEFVIEPRIALNRWVKITIVNENTRIKVYQNDNLLGLIKDSSRKKPIAQRGTFKFYNYNVDYQLDDISYYNGTISQRDIKYTFKEDHGQFVYDHWGERLQYNKAYYLLSDDNKSAFETVYETKRLKLKSVPGVDIKYLGMNDRVYGYYGGLQFKLVPLDSKNMNNYVRWGDKFTMQSIETTNLSLAIIQDNAYFAPTQLKLISNEGKSEEEIFTFDRNIKLQNAAILVGTGNSKQGPISAYKRGYSGDLWINGARLDGYVTVVNKSNYSNDEIQEKFKWIFVPKDANWVE.

Positions 1 to 476 (MDVLEMFDVN…VAGMQRMVSL (476 aa)) are has protease activity. Residue histidine 250 coordinates Zn(2+). Glutamate 251 is an active-site residue. Positions 254 and 296 each coordinate Zn(2+).

This sequence belongs to the peptidase M27 family. It depends on Zn(2+) as a cofactor.

The enzyme catalyses Limited hydrolysis of proteins of the neuroexocytosis apparatus, synaptobrevins, SNAP25 or syntaxin. No detected action on small molecule substrates.. With respect to regulation, inhibited by EDTA and 1,10-phenanthroline. Functionally, when overexpressed the N-terminus (residues 1-476) cleaves rat synaptobrevin-2/VAMP2 between '89-Trp-|-Trp-90' in vitro. This releases the cytoplasmic domain of VAMP2 from the synaptic vesicle membrane, which would prevent the assembly of the trans-SNARE complex on the membrane and thus prevent vesicle-target membrane fusion and neurotransmitter release. The protein is Putative botulinum-like toxin Wo of Weissella oryzae (strain DSM 25784 / JCM 18191 / LMG 30913 / SG25).